Here is a 232-residue protein sequence, read N- to C-terminus: Enolase-phosphatase E1 (232 aa).

Belongs to the HAD-like hydrolase superfamily. MasA/MtnC family. Monomer. The cofactor is Mg(2+).

It carries out the reaction 5-methylsulfanyl-2,3-dioxopentyl phosphate + H2O = 1,2-dihydroxy-5-(methylsulfanyl)pent-1-en-3-one + phosphate. It functions in the pathway amino-acid biosynthesis; L-methionine biosynthesis via salvage pathway; L-methionine from S-methyl-5-thio-alpha-D-ribose 1-phosphate: step 3/6. It participates in amino-acid biosynthesis; L-methionine biosynthesis via salvage pathway; L-methionine from S-methyl-5-thio-alpha-D-ribose 1-phosphate: step 4/6. In terms of biological role, bifunctional enzyme that catalyzes the enolization of 2,3-diketo-5-methylthiopentyl-1-phosphate (DK-MTP-1-P) into the intermediate 2-hydroxy-3-keto-5-methylthiopentenyl-1-phosphate (HK-MTPenyl-1-P), which is then dephosphorylated to form the acireductone 1,2-dihydroxy-3-keto-5-methylthiopentene (DHK-MTPene). This chain is Enolase-phosphatase E1, found in Acidiphilium cryptum (strain JF-5).